Consider the following 539-residue polypeptide: Phosphoenolpyruvate carboxykinase (ATP) (539 aa).

Substrate is bound by residues arginine 61, tyrosine 195, and lysine 201. Residues lysine 201, histidine 220, and glycine 238–threonine 246 each bind ATP. Positions 201 and 220 each coordinate Mn(2+). A Mn(2+)-binding site is contributed by aspartate 259. ATP-binding residues include glutamate 287, arginine 325, and threonine 450. Arginine 325 provides a ligand contact to substrate.

This sequence belongs to the phosphoenolpyruvate carboxykinase (ATP) family. Requires Mn(2+) as cofactor.

It localises to the cytoplasm. The enzyme catalyses oxaloacetate + ATP = phosphoenolpyruvate + ADP + CO2. Its pathway is carbohydrate biosynthesis; gluconeogenesis. Functionally, involved in the gluconeogenesis. Catalyzes the conversion of oxaloacetate (OAA) to phosphoenolpyruvate (PEP) through direct phosphoryl transfer between the nucleoside triphosphate and OAA. The chain is Phosphoenolpyruvate carboxykinase (ATP) from Methylorubrum extorquens (strain CM4 / NCIMB 13688) (Methylobacterium extorquens).